The following is a 367-amino-acid chain: Phthiodiolone/phenolphthiodiolone dimycocerosates ketoreductase (367 aa).

It belongs to the mer family. Phthiodiolone/phenolphthiodiolone dimycocerosates ketoreductase subfamily.

In terms of biological role, catalyzes the reduction of the keto moiety of phthiodiolone dimycocerosates (DIM B) and glycosylated phenolphthiodiolone dimycocerosates to form the intermediate compounds phthiotriol and glycosylated phenolphthiotriol dimycocerosates during phthiocerol dimycocerosates (DIM A) and glycosylated phenolphthiocerol dimycocerosates (PGL) biosynthesis. In Mycobacterium kansasii, this protein is Phthiodiolone/phenolphthiodiolone dimycocerosates ketoreductase.